Here is an 891-residue protein sequence, read N- to C-terminus: Major core protein 4a precursor (891 aa).

The protein belongs to the poxviridae protein P4a family. As to quaternary structure, interacts with P39/A4.

The protein localises to the virion. Core protein 4a is the most abundant virion protein. Major component of the virion core that undergoes proteolytic processing during the immature virion (IV) to mature virion (MV) transition. This chain is Major core protein 4a precursor, found in Fowlpox virus (strain NVSL) (FPV).